The chain runs to 426 residues: Zinc finger CCCH domain-containing protein 13 (426 aa).

A C3H1-type zinc finger spans residues 10–36 (AYKTKLCALWQRGNCNRDTCSFAHGHG). Disordered stretches follow at residues 34-155 (GHGD…HEKQ), 253-317 (NEEG…DKTS), and 390-426 (NDADDKTRSPAIPLQPPPVVQNAYEQYEGDDEEVDVE). Basic and acidic residues-rich tracts occupy residues 54-70 (RRDYRAGDFRGRIDRRF), 78-101 (PGRESRGHRPLYDRRPSSRERDSS), and 108-120 (RKSERRHEKKTDD). Residues 124 to 133 (NSSRSLSLSD) show a composition bias toward low complexity. The segment covering 135–155 (NDEKKKDKFSSGDEKEDHEKQ) has biased composition (basic and acidic residues). A coiled-coil region spans residues 144–245 (SSGDEKEDHE…FERLGDLLAS (102 aa)). Residues 255–272 (EGSSVNEDLNERSPNTAA) show a composition bias toward polar residues. Over residues 284-317 (EEAKAVKKRRERDSDTMTRSDKYRSDVTDFDKTS) the composition is skewed to basic and acidic residues. Residues 416 to 426 (YEGDDEEVDVE) show a composition bias toward acidic residues.

This Oryza sativa subsp. japonica (Rice) protein is Zinc finger CCCH domain-containing protein 13.